We begin with the raw amino-acid sequence, 202 residues long: Large ribosomal subunit protein uL13 (202 aa).

This sequence belongs to the universal ribosomal protein uL13 family.

The protein is Large ribosomal subunit protein uL13 of Caenorhabditis elegans.